The primary structure comprises 221 residues: Growth hormone-releasing peptides (221 aa).

The first 25 residues, 1 to 25 (MHLKIGTLTIRTIMLFTLCTFLTLF), serve as a signal peptide directing secretion. Positions 26–95 (AFSTCFDETK…QPENEFLQER (70 aa)) are excised as a propeptide. Residue phenylalanine 107 is modified to Phenylalanine amide. A propeptide spanning residues 110–127 (TSDDKIAKSIPSFDKIAK) is cleaved from the precursor. Phenylalanine amide occurs at positions 136, 156, and 176. Residues 179 to 221 (TPHSDRLQYEMNSHPLELKNPEEDSDRKKRQAMTFRIRTDLQM) constitute a propeptide that is removed on maturation.

It belongs to the FARP (FMRFamide related peptide) family. Observed in the suprachiasmatic nucleus and in several telencephalic and diencephalic regions.

The protein localises to the secreted. In terms of biological role, primary role is to release GH from the pituitary. May act as an endogenous ligand in the bullfrog hypothalamo-hypophysial system. The protein is Growth hormone-releasing peptides of Aquarana catesbeiana (American bullfrog).